A 296-amino-acid chain; its full sequence is Ribose import binding protein RbsB (296 aa).

The N-terminal stretch at 1 to 25 (MNMKKLATLVSAVALSATVSANAMA) is a signal peptide.

The protein belongs to the bacterial solute-binding protein 2 family. The complex is composed of an ATP-binding protein (RbsA), two transmembrane proteins (RbsC) and a solute-binding protein (RbsB).

It is found in the periplasm. Its function is as follows. Part of the ABC transporter complex RbsABC involved in ribose import. Binds ribose. Also serves as the primary chemoreceptor for chemotaxis. This chain is Ribose import binding protein RbsB, found in Escherichia coli (strain K12).